The primary structure comprises 575 residues: MNQTRVFLIFAWLMVAALLWMEWGKDKAAANAPTPIASQAVPAARDPDAAAPAANVPSAQAIPQAGSPAAVPGTSTTTATATPVAAGAAPAITLTSDVLRLKLDGRSVLDAELLQFPQTKDGTEPVKLLTEDAAHPYNATSGWASERSPVPGVGGFRAEQPGTTFELAKGQNTLVVPFVWNGPNGVSIRRIFTLQRGSYAISIKDEVINKSDAAWNGYVFRKLSRVPTILSRGMTNPDSFSFNGATWYSPQEGYERRAFKDYMDDGGLNRQITGGWVALLQHHFFTAWIPQKDQASLYVLAQDGPRDVAELRGPAFTVAPGQSASTEARLWVGPKLVSLLAKEDVKGLDRVVDYSRFSIMAIIGQGLFWVLSHLHSFLHNWGWAIIGLVLLLRLALYPLSAAQYKSGAKMRRFQPRLAQLKERYGDDRQKYQQATMELFKKEKINPMGGCLPLLIQMPIFFALYWVLVESVELRQAPWLGWIQDLTARDPYFILPVLNIAIMWATQKLTPTPGMDPMQAKMMQFMPLVFGVMMAFMPAGLVLYWVVNGGLGLLIQWWMIRQHGEKPSKIIQANAK.

6 helical membrane-spanning segments follow: residues 6–26, 357–377, 381–401, 448–468, 490–510, and 526–546; these read VFLI…WGKD, FSIM…LHSF, WGWA…PLSA, GGCL…WVLV, PYFI…KLTP, and PLVF…YWVV.

Belongs to the OXA1/ALB3/YidC family. Type 1 subfamily. In terms of assembly, interacts with the Sec translocase complex via SecD. Specifically interacts with transmembrane segments of nascent integral membrane proteins during membrane integration.

Its subcellular location is the cell inner membrane. In terms of biological role, required for the insertion and/or proper folding and/or complex formation of integral membrane proteins into the membrane. Involved in integration of membrane proteins that insert both dependently and independently of the Sec translocase complex, as well as at least some lipoproteins. Aids folding of multispanning membrane proteins. The protein is Membrane protein insertase YidC of Xanthomonas campestris pv. campestris (strain B100).